The primary structure comprises 303 residues: 2-dehydropantoate 2-reductase (303 aa).

NADP(+) contacts are provided by residues 7–12 (GCGALG), N98, and A122. N98 serves as a coordination point for substrate. The active-site Proton donor is the K176. Substrate is bound by residues N180, N184, N194, and S244. E256 lines the NADP(+) pocket.

It belongs to the ketopantoate reductase family.

Its subcellular location is the cytoplasm. The catalysed reaction is (R)-pantoate + NADP(+) = 2-dehydropantoate + NADPH + H(+). Its pathway is cofactor biosynthesis; (R)-pantothenate biosynthesis; (R)-pantoate from 3-methyl-2-oxobutanoate: step 2/2. Functionally, catalyzes the NADPH-dependent reduction of ketopantoate into pantoic acid. In Yersinia pestis, this protein is 2-dehydropantoate 2-reductase (panE).